Here is a 106-residue protein sequence, read N- to C-terminus: SH3 domain-binding glutamic acid-rich-like protein 2-A (106 aa).

The short motif at 61–67 (QGNPLPP) is the SH3-binding element.

This sequence belongs to the SH3BGR family.

It localises to the nucleus. The protein is SH3 domain-binding glutamic acid-rich-like protein 2-A (sh3bgrl2-a) of Xenopus laevis (African clawed frog).